Consider the following 321-residue polypeptide: Cytochrome f (321 aa).

A signal peptide spans 1 to 35 (MQNRKTYDDWVKKWITQSISVLIMIDIMTRTSIAN). Residues tyrosine 37, cysteine 57, cysteine 60, and histidine 61 each coordinate heme. The helical transmembrane segment at 287-307 (VQGLLLFLASVVLAQIFLVLK) threads the bilayer.

This sequence belongs to the cytochrome f family. As to quaternary structure, the 4 large subunits of the cytochrome b6-f complex are cytochrome b6, subunit IV (17 kDa polypeptide, petD), cytochrome f and the Rieske protein, while the 4 small subunits are PetG, PetL, PetM and PetN. The complex functions as a dimer. Requires heme as cofactor.

It localises to the plastid. Its subcellular location is the chloroplast thylakoid membrane. Functionally, component of the cytochrome b6-f complex, which mediates electron transfer between photosystem II (PSII) and photosystem I (PSI), cyclic electron flow around PSI, and state transitions. In Cryptomeria japonica (Japanese cedar), this protein is Cytochrome f.